The following is a 664-amino-acid chain: MEGRDDGGGKVIGLIEKATKSTAQEVDPRLLKAIKSIVRYSDSEVRLSSQTLMELMRHNHSQVRYLTLFIIDELFMRSKLFRTLIIENLDQLLSLSIGFRSNLPLPAPPAVATTLRSKAIEFLEKWNLSFGFHYKELRLGFDYLKNTLKLKFPDLQANAARIQRERQEREMKTKEILRNKFDSLRVSFGLFKYEIEVTIKEIKECMEIVQWRGDDGVPLAILDEEDFEEIRCSHLRQIRLDSLKQSEKVEETGENRIVFDVLREQCKLLVTKHLISVQEGISLLIRVDVSDNRTRDSMLKDLIDIRNNILAAKKKWEEAGFTMSRMTDIHGNEETNEEEEDIWEEDDGKVKTDSVKNVAHVMRTQQSENSSLPSSGEAKKSTSEARSNKVSNTKKVGSSGNSLRDKLISEAPVMNWGSQLTNWESTTEVRANYRGLEIESHWGRVDQDAIIPADKIAELNLQATVYREERTETPPCRASLKKGGLCQRRDLRVCPFHGPIVPRDDEGNTIIQESPLDESENQTSSTSGTNQDVSMDETTSDSDPNQLARQIAKEALKNIREKDKEVVRKRAKLVKVKVKEHNHEVLRGAAIASTSRSNAMDDEFDRVFAEKKNKKQTFSTRRKKTTAKDRISQRLFSNRVKGTNPQQLAQGNDEKCRDTSANQW.

Positions 10–153 (KVIGLIEKAT…LKNTLKLKFP (144 aa)) are VHS-like. Residues 148–180 (LKLKFPDLQANAARIQRERQEREMKTKEILRNK) are a coiled coil. 2 disordered regions span residues 330 to 350 (HGNE…DGKV) and 362 to 403 (MRTQ…GNSL). Residues 334 to 347 (ETNEEEEDIWEEDD) show a composition bias toward acidic residues. Over residues 363–374 (RTQQSENSSLPS) the composition is skewed to polar residues. A compositionally biased stretch (basic and acidic residues) spans 377 to 387 (EAKKSTSEARS). Residues 388-402 (NKVSNTKKVGSSGNS) show a composition bias toward polar residues. The UVSSA-type zinc-finger motif lies at 473–500 (TPPCRASLKKGGLCQRRDLRVCPFHGPI). The Zn(2+) site is built by Cys-476, Cys-486, Cys-494, and His-497. 2 disordered regions span residues 514–546 (SPLD…DPNQ) and 640–664 (VKGT…ANQW). Composition is skewed to polar residues over residues 521–533 (NQTS…NQDV) and 640–650 (VKGTNPQQLAQ).

Belongs to the UVSSA family.

The protein resides in the chromosome. The chain is UV-stimulated scaffold protein A homolog from Arabidopsis thaliana (Mouse-ear cress).